We begin with the raw amino-acid sequence, 440 residues long: Protein arginine N-methyltransferase 2 (440 aa).

Residues 147–194 (LSSGSEDGDEEMEVQQDDDEEAPQLVSTEDVEPTVEEPKFIPPDAKEK) form a disordered region. The segment covering 152-168 (EDGDEEMEVQQDDDEEA) has biased composition (acidic residues). Positions 182 to 194 (EEPKFIPPDAKEK) are enriched in basic and acidic residues. One can recognise an RMT2 domain in the interval 192–440 (KEKQVTSEEY…RYAVGTSNRL (249 aa)). Residues Y201, M230, 252–257 (FGMGIV), 273–275 (EAH), 310–311 (WQ), and D330 contribute to the S-adenosyl-L-methionine site.

It belongs to the class I-like SAM-binding methyltransferase superfamily. RMT2 methyltransferase family. Monomer.

It is found in the cytoplasm. Its subcellular location is the nucleus. S-adenosyl-L-methionine-dependent protein-arginine N-methyltransferase that methylates the delta-nitrogen atom of arginine residues to form N5-methylarginine (type IV) in target proteins. Monomethylates ribosomal protein L12. The polypeptide is Protein arginine N-methyltransferase 2 (Gibberella zeae (strain ATCC MYA-4620 / CBS 123657 / FGSC 9075 / NRRL 31084 / PH-1) (Wheat head blight fungus)).